The chain runs to 215 residues: uncharacterized protein (215 aa).

Positions Leu-25–Gln-48 are disordered. Low complexity predominate over residues Ser-27–Ala-47.

This is an uncharacterized protein from Homo sapiens (Human).